The sequence spans 1381 residues: Contactin-associated protein 1 (1381 aa).

An N-terminal signal peptide occupies residues 1–20 (MMSLRLFSILLAAVVSGAQG). The Extracellular portion of the chain corresponds to 21-1284 (WGYYGCNEEL…PYYHDDGWIA (1264 aa)). One can recognise an F5/8 type C domain in the interval 26-169 (CNEELVGPLY…IGLRLGIYGC (144 aa)). C26 and C169 are oxidised to a cystine. N121, N129, and N277 each carry an N-linked (GlcNAc...) asparagine glycan. 2 Laminin G-like domains span residues 204–356 (FKTE…AFRC) and 390–539 (FRTW…FDTC). An intrachain disulfide couples C324 to C356. 3 N-linked (GlcNAc...) asparagine glycosylation sites follow: N421, N500, and N519. 4 disulfides stabilise this stretch: C507–C539, C545–C556, C550–C565, and C567–C577. Positions 544-576 (RCSPNMCEHDGRCYQSWDDFICYCELTGYKGVT) constitute an EGF-like 1 domain. A Fibrinogen C-terminal domain is found at 577-796 (CHEPLYKESC…NTISFRTGAA (220 aa)). Residues N598, N654, N665, N764, N805, N844, N861, N949, and N957 are each glycosylated (N-linked (GlcNAc...) asparagine). The Laminin G-like 3 domain occupies 814-958 (FRTSAPSGVF…NASEGTFPNC (145 aa)). 4 cysteine pairs are disulfide-bonded: C931/C958, C962/C975, C969/C984, and C986/C996. Residues 962 to 996 (CTHPRFPCFHGGRCVERYSYYTCDCDLTAFDGPYC) enclose the EGF-like 2 domain. N1079 and N1148 each carry an N-linked (GlcNAc...) asparagine glycan. The region spanning 1089-1251 (FSTSSAPAVL…VQGELSESNC (163 aa)) is the Laminin G-like 4 domain. A disulfide bridge links C1210 with C1251. A helical transmembrane segment spans residues 1285 to 1305 (ILLGFLVAFLLLGLVGMLVLF). The Cytoplasmic portion of the chain corresponds to 1306 to 1381 (YLQNHRYKGS…PQILEESRSE (76 aa)). Residues 1317-1381 (HTNEPKATHD…PQILEESRSE (65 aa)) form a disordered region. Residues 1319–1329 (NEPKATHDSHP) are compositionally biased toward basic and acidic residues. The SH3-binding signature appears at 1329 to 1366 (PGGKAPLPPSGPAQAPAPTPAPTQVPTPAPAPASGPGP). Residues 1334-1363 (PLPPSGPAQAPAPTPAPTQVPTPAPAPASG) are compositionally biased toward pro residues. A Phosphoserine modification is found at S1380.

The protein belongs to the neurexin family. As to quaternary structure, interacts with CNTN1/contactin in cis form. In terms of tissue distribution, predominantly expressed in brain. In myelinated nerve fibers of the CNS predominantly found in paranodal axoglial junctions. In unmyelinated nerve fibers of the CNS diffusely distributed along the entire surface. Weak expression is detected in ovary, pancreas, colon, lung, heart, intestine and testis.

It is found in the membrane. Its subcellular location is the cell junction. The protein resides in the paranodal septate junction. Its function is as follows. Required, with CNTNAP2, for radial and longitudinal organization of myelinated axons. Plays a role in the formation of functional distinct domains critical for saltatory conduction of nerve impulses in myelinated nerve fibers. Demarcates the paranodal region of the axo-glial junction. In association with contactin involved in the signaling between axons and myelinating glial cells. This is Contactin-associated protein 1 (Cntnap1) from Rattus norvegicus (Rat).